Consider the following 586-residue polypeptide: Paxillin (586 aa).

At methionine 1 the chain carries N-acetylmethionine. Residues 3–15 carry the LD motif 1 motif; that stretch reads DLDALLADLESTT. The disordered stretch occupies residues 13–138; that stretch reads STTSHISKRP…PSPTVMSSSL (126 aa). Phosphotyrosine; by PTK6 is present on tyrosine 31. Residues 45–54 show a composition bias toward pro residues; sequence VPPPVPPPPS. Serine 83 and serine 85 each carry phosphoserine. A compositionally biased stretch (low complexity) spans 86 to 98; it reads PIYSSSTKNSSAS. Tyrosine 88 carries the post-translational modification Phosphotyrosine. Serine 106 is subject to Phosphoserine. Tyrosine 118 bears the Phosphotyrosine; by PTK6 mark. Phosphoserine is present on residues serine 119, serine 126, and serine 130. A compositionally biased stretch (polar residues) spans 121-137; that stretch reads PNKQKSAEPSPTVMSSS. Threonine 132 is subject to Phosphothreonine. A phosphoserine mark is found at serine 137, serine 140, and serine 143. The LD motif 2 signature appears at 144-156; that stretch reads ELDRLLLELNAVQ. Phosphotyrosine is present on tyrosine 210. Positions 220–241 are disordered; the sequence is GGKAGPLMKEKPKRNGGRGLED. The LD motif 3 signature appears at 245 to 257; sequence SVESLLDELENSV. Serine 259 carries the post-translational modification Phosphoserine. The disordered stretch occupies residues 266–290; it reads VNQGEMSSPQRVTSSQQQTRISASS. At serine 273 the chain carries Phosphoserine; by CDK5. A phosphoserine mark is found at serine 279, serine 287, serine 290, serine 301, serine 317, serine 327, and serine 335. Residues 291–310 are required for binding to PARVA and ILK; that stretch reads ATRELDELMASLSDFKFMAQ. Residues 294–305 carry the LD motif 4 motif; that stretch reads ELDELMASLSDF. Positions 309-329 are disordered; sequence AQGKTGSSSPPGGLSKPGSQL. Low complexity predominate over residues 310–329; that stretch reads QGKTGSSSPPGGLSKPGSQL. Residues 328–340 carry the LD motif 5 motif; that stretch reads QLDSMLGSLQSDL. 3 LIM zinc-binding domains span residues 353–403, 412–462, and 471–521; these read CGAC…CEKD, CYYC…CRKD, and CGGC…CEVH. Serine 528 is modified (phosphoserine). An LIM zinc-binding 4 domain is found at 530 to 580; the sequence is CSGCQKPITGRCITAMAKKFHPEHFVCAFCLKQLNKGTFKEQNDKPYCQSC.

Belongs to the paxillin family. In terms of assembly, interacts in vitro with VCL/vinculin as well as to the SH3 domain of SRC and, when tyrosine phosphorylated, to the SH2 domain of CRK. Interacts with GIT1. Interacts with NUDT16L1/SDOS. Interacts with PTK2/FAK1. Interacts with PTK2B/PYK2. Interacts with ASAP2. Interacts with unphosphorylated ITGA4. Interacts with RNF5. Interacts with PDCD10. Interacts with NEK3, the interaction is prolactin-dependent. Interacts with PTK6. Interacts with TGFB1I1. Interacts with SORBS1. Interacts with PARVB. Interacts (via LD motif 4) with PARVA/PARVIN. Interacts (via LD motif 4) with ILK. Interacts (via cytoplasmic domain) with CEACAM1; the interaction is phosphotyrosyl-dependent. Interacts with LIMA1; this complex stabilizes actin dynamics. Interacts with CD36 (via C-terminus). Interacts with TRIM15. Interacts with PAK4; PAK4 acts as a scaffold to suppport PAXI phosphorylation at Ser-301. Post-translationally, phosphorylated by MAPK1/ERK2. Phosphorylated on tyrosine residues during integrin-mediated cell adhesion, embryonic development, fibroblast transformation and following stimulation of cells by mitogens. Phosphorylation at Ser-273 by CDK5 reduces its interaction with PTK2/FAK1 in matrix-cell focal adhesions (MCFA) during oligodendrocytes (OLs) differentiation. Phosphorylation at Tyr-31 and Tyr-118 by PTK6 promote the activation of RAC1 via CRK/CrKII, thereby promoting migration and invasion. Phosphorylation at Ser-279 by SLK is required for PXN redistribution and cell motility. Phosphorylation at Ser-301 promotes focal adhesion disassembly during cell migration.

It is found in the cytoplasm. Its subcellular location is the cytoskeleton. The protein localises to the cell junction. It localises to the focal adhesion. The protein resides in the cell cortex. Cytoskeletal protein involved in actin-membrane attachment at sites of cell adhesion to the extracellular matrix (focal adhesion). Recruits other proteins such as TRIM15 to focal adhesion. This Rattus norvegicus (Rat) protein is Paxillin.